Reading from the N-terminus, the 373-residue chain is MAVDSLETEIDTAVRVVHLASSLCVKVQEKLHLPNGGHVKSKDDDSPVTVADFGVQAIVSWVLAEVFGDQNLSIVAEEDTETLSEADSLGLLGAVSNAVNEALSEAQNYGLPKPVKPLGSSEILKAISRCNSVGGPKGRHWVLDPVDGTLGFVRGDQYAVALALIENGKVLLGVLGCPNYPVKKECLSNGCNQAMKTKAVAGSVSKGCVMYAKRGSGQAWMQPLIVGGIPESATLLKVSSVDDPVLATVCEPVERANSNHLFTAGLANSMGVRKQPMRVYSMVKYAAIARGDAEVFMKFAQSSYKEKIWDHAAGVVIVEEAGGVVTDAGGRNLDFSKGVYLEGLDRGIIACSGQVLHEKIIGAVYASWESSSL.

Residue Asp-52 is the Proton acceptor of the active site. Residues Glu-77, Asp-144, Val-146, and Asp-147 each contribute to the Mg(2+) site. Catalysis depends on Thr-149, which acts as the Proton acceptor. The adenosine 3',5'-bisphosphate site is built by Thr-149, Ser-281, Lys-284, Lys-298, and Asp-310. Residues Ser-281, Lys-284, Lys-298, and Asp-310 each contribute to the AMP site. Asp-310 serves as a coordination point for Mg(2+).

The protein belongs to the inositol monophosphatase superfamily. Mg(2+) is required as a cofactor. Expressed in roots, leaves, stems, flowers and siliques.

It carries out the reaction adenosine 3',5'-bisphosphate + H2O = AMP + phosphate. The catalysed reaction is 3'-phosphoadenylyl sulfate + H2O = adenosine 5'-phosphosulfate + phosphate. Its activity is regulated as follows. Inhibited by Li(+) (IC(50)=10 mM), Na(+) (IC(50)=50 mM) and Ca(2+) (IC(50)=0.06 mM). Its function is as follows. Phosphatase that converts adenosine 3'-phosphate 5'-phosphosulfate (PAPS) to adenosine 5'-phosphosulfate (APS) and 3'-phosphoadenosine 5'-phosphate (3'-PAP) to AMP. May regulate the flux of sulfur in the sulfur-activation pathway by converting PAPS to APS. Prevents both the toxicity of PAP on RNA processing enzymes as well as the product inhibition by PAP of sulfate conjugation. The polypeptide is 3',5'-bisphosphate nucleotidase AHL (Arabidopsis thaliana (Mouse-ear cress)).